Here is a 140-residue protein sequence, read N- to C-terminus: Putative transcription elongation factor S-II-like protein 349L (140 aa).

Residues 100–139 form a TFIIS-type zinc finger; sequence GAIKCKCGSERVFSFSKQTRSGDESTSVFALCSSCKSKWV. Zn(2+) contacts are provided by cysteine 104, cysteine 106, cysteine 131, and cysteine 134.

It belongs to the IIV-6 349L family.

The sequence is that of Putative transcription elongation factor S-II-like protein 349L from Acheta domesticus (House cricket).